A 119-amino-acid polypeptide reads, in one-letter code: Large ribosomal subunit protein bL20c (119 aa).

It belongs to the bacterial ribosomal protein bL20 family.

It localises to the plastid. The protein resides in the chloroplast. Binds directly to 23S ribosomal RNA and is necessary for the in vitro assembly process of the 50S ribosomal subunit. It is not involved in the protein synthesizing functions of that subunit. This is Large ribosomal subunit protein bL20c from Amborella trichopoda.